Here is a 458-residue protein sequence, read N- to C-terminus: Probable Xaa-Pro aminopeptidase pepP (458 aa).

Residues Asp254, Asp265, Glu388, and Glu428 each contribute to the Mn(2+) site.

This sequence belongs to the peptidase M24B family. Mn(2+) is required as a cofactor.

It catalyses the reaction Release of any N-terminal amino acid, including proline, that is linked to proline, even from a dipeptide or tripeptide.. Its function is as follows. Catalyzes the removal of a penultimate prolyl residue from the N-termini of peptides. The polypeptide is Probable Xaa-Pro aminopeptidase pepP (pepP) (Botryotinia fuckeliana (strain B05.10) (Noble rot fungus)).